The sequence spans 179 residues: NADH:FAD oxidoreductase (179 aa).

Position 48-51 (48-51 (TCSA)) interacts with FAD. 54 to 57 (SVCD) serves as a coordination point for NAD(+). FAD-binding positions include 65-71 (CINRKSY), Ala-99, 104-109 (VPMEER), and Ser-144. NAD(+) is bound by residues His-145 and 166 to 169 (YHRR). Tyr-166 contributes to the FAD binding site.

Belongs to the non-flavoprotein flavin reductase family. In terms of assembly, homodimer. The chlorophenol-4-monooxygenase is composed of an oxygenase component TftD and a reductase component TftC.

It carries out the reaction FADH2 + NAD(+) = FAD + NADH + 2 H(+). It functions in the pathway xenobiotic degradation. Its function is as follows. Reductase component of a two-component system that degrades 2,4,5-trichlorophenol. TftC provides the FADH(2) required by TftD. TftD oxidizes 2,4,5-trichlorophenol (2,4,5-TCP) to 2,5-dichloro-p-benzoquinone, which is chemically reduced to 2,5-dichloro-p-hydroquinone (2,5-DiCHQ). Then, TftD oxidizes the latter to 5-chloro-2-hydroxy-p-benzoquinone. The sequence is that of NADH:FAD oxidoreductase (tftC) from Burkholderia cepacia (Pseudomonas cepacia).